Here is a 209-residue protein sequence, read N- to C-terminus: Large ribosomal subunit protein uL3 (209 aa).

This sequence belongs to the universal ribosomal protein uL3 family. As to quaternary structure, part of the 50S ribosomal subunit. Forms a cluster with proteins L14 and L19.

Its function is as follows. One of the primary rRNA binding proteins, it binds directly near the 3'-end of the 23S rRNA, where it nucleates assembly of the 50S subunit. This Carboxydothermus hydrogenoformans (strain ATCC BAA-161 / DSM 6008 / Z-2901) protein is Large ribosomal subunit protein uL3.